A 341-amino-acid polypeptide reads, in one-letter code: L-threonine 3-dehydrogenase (341 aa).

A Zn(2+)-binding site is contributed by C38. Catalysis depends on charge relay system residues T40 and H43. 6 residues coordinate Zn(2+): H63, E64, C93, C96, C99, and C107. Residues I175, D195, R200, 262-264, and 286-287 each bind NAD(+); these read LGI and IY.

The protein belongs to the zinc-containing alcohol dehydrogenase family. Homotetramer. It depends on Zn(2+) as a cofactor.

It localises to the cytoplasm. The enzyme catalyses L-threonine + NAD(+) = (2S)-2-amino-3-oxobutanoate + NADH + H(+). It participates in amino-acid degradation; L-threonine degradation via oxydo-reductase pathway; glycine from L-threonine: step 1/2. Its function is as follows. Catalyzes the NAD(+)-dependent oxidation of L-threonine to 2-amino-3-ketobutyrate. This chain is L-threonine 3-dehydrogenase, found in Escherichia coli O157:H7.